Reading from the N-terminus, the 507-residue chain is ATP synthase subunit alpha, chloroplastic (507 aa).

170–177 (GDRQTGKT) contacts ATP.

It belongs to the ATPase alpha/beta chains family. As to quaternary structure, F-type ATPases have 2 components, CF(1) - the catalytic core - and CF(0) - the membrane proton channel. CF(1) has five subunits: alpha(3), beta(3), gamma(1), delta(1), epsilon(1). CF(0) has four main subunits: a, b, b' and c.

Its subcellular location is the plastid. The protein resides in the chloroplast thylakoid membrane. The catalysed reaction is ATP + H2O + 4 H(+)(in) = ADP + phosphate + 5 H(+)(out). In terms of biological role, produces ATP from ADP in the presence of a proton gradient across the membrane. The alpha chain is a regulatory subunit. The protein is ATP synthase subunit alpha, chloroplastic of Physcomitrium patens (Spreading-leaved earth moss).